The primary structure comprises 860 residues: M-phase phosphoprotein 8 (860 aa).

The residue at position 1 (methionine 1) is an N-acetylmethionine. Residues serine 51, serine 85, serine 136, and serine 138 each carry the phosphoserine modification. Residues 59-118 (FEVEKILDMKTEGGKVLYKVRWKGYTSDDDTWEPEIHLEDCKEVLLEFRKKIAENKAKAV) enclose the Chromo domain. The segment at 80–87 (WKGYTSDD) is histone H3K9me3 binding. Positions 129-141 (NDIFEANSDSDQQ) are enriched in polar residues. Residues 129–191 (NDIFEANSDS…SKPDLESSLE (63 aa)) form a disordered region. Threonine 144 is modified (phosphothreonine). Phosphoserine; by CDK1 is present on residues serine 149 and serine 164. Basic and acidic residues-rich tracts occupy residues 159–169 (QREEKSPDDLK) and 177–186 (KLKDKSKPDL). Serine 188, serine 189, and serine 192 each carry phosphoserine. Positions 206–249 (AKEELKESKKPKKDEVKETKELKKVKKGEIRDLKTKTREDPKEN) are enriched in basic and acidic residues. A disordered region spans residues 206 to 440 (AKEELKESKK…GRKEPKGLKT (235 aa)). Positions 259-268 (ESQVESESSV) are enriched in low complexity. Phosphoserine occurs at positions 266, 272, and 279. Residues 280–314 (EGLHSDSREEKQNTKSARERAGQDMGLEHGFEKPL) are compositionally biased toward basic and acidic residues. At serine 319 the chain carries Phosphoserine. Position 334 is a phosphothreonine; by CDK1 (threonine 334). Residues 336 to 377 (RKAEDTRENRKLENKNAFLEKKTVPKKQRNQDRSKSAAELEK) are compositionally biased toward basic and acidic residues. Phosphothreonine; by CDK1 is present on threonine 385. A phosphoserine mark is found at serine 392, serine 400, and serine 403. The span at 408–440 (KETKRNESKEKYQKRHDSDKEEKGRKEPKGLKT) shows a compositional bias: basic and acidic residues. The interval 431 to 560 (GRKEPKGLKT…HLDGKDENFA (130 aa)) is interaction with humanin. At threonine 454 the chain carries Phosphothreonine. Residues 458–496 (KNDVSENNRKREEIPLDFKTIDDHKTKENKQSLKERRNT) are disordered. ANK repeat units follow at residues 600-629 (SGMTLVMLAAAGGQDDLLRLLITKGAKVNG), 633-662 (NGTTALIHAAEKNFLTTVAILLEAGAFVNV), 666-695 (NGETALMKACKRGNSDIVRLVIECGADCNI), and 699-728 (HQNSALHFAKQSNNVLVYDLLKNHLETLSR).

Homodimer. Interacts (via chromo domain) with histone H3K9me3. Has the highest affinity for H3K9me3, and lesser affinity for H3K9me2 and H3K9me1. Component of the HUSH complex; at least composed of TASOR, PPHLN1 and MPHOSPH8. Interacts with DNMT3, EHMT1 and SETDB1. Interacts with MORC2; the interaction associateS MORC2 with the HUSH complex which recruits MORC2 to heterochromatic loci. Interacts with ZNF638; leading to recruitment of the HUSH complex to unintegrated retroviral DNA. Interacts with TASOR. Interacts with humanin. Phosphorylated in M (mitotic) phase. Phosphorylation by CDK1 promotes dissociation from chromatin.

The protein resides in the nucleus. Its subcellular location is the chromosome. Its function is as follows. Heterochromatin component that specifically recognizes and binds methylated 'Lys-9' of histone H3 (H3K9me) and promotes recruitment of proteins that mediate epigenetic repression. Mediates recruitment of the HUSH complex to H3K9me3 sites: the HUSH complex is recruited to genomic loci rich in H3K9me3 and is required to maintain transcriptional silencing by promoting recruitment of SETDB1, a histone methyltransferase that mediates further deposition of H3K9me3, as well as MORC2. Binds H3K9me and promotes DNA methylation by recruiting DNMT3A to target CpG sites; these can be situated within the coding region of the gene. Mediates down-regulation of CDH1 expression. Also represses L1 retrotransposons in collaboration with MORC2 and, probably, SETDB1, the silencing is dependent of repressive epigenetic modifications, such as H3K9me3 mark. Silencing events often occur within introns of transcriptionally active genes, and lead to the down-regulation of host gene expression. The HUSH complex is also involved in the silencing of unintegrated retroviral DNA by being recruited by ZNF638: some part of the retroviral DNA formed immediately after infection remains unintegrated in the host genome and is transcriptionally repressed. This is M-phase phosphoprotein 8 from Homo sapiens (Human).